We begin with the raw amino-acid sequence, 633 residues long: Glutamyl-tRNA(Gln) amidotransferase subunit E (633 aa).

It belongs to the GatB/GatE family. GatE subfamily. Heterodimer of GatD and GatE.

It catalyses the reaction L-glutamyl-tRNA(Gln) + L-glutamine + ATP + H2O = L-glutaminyl-tRNA(Gln) + L-glutamate + ADP + phosphate + H(+). Allows the formation of correctly charged Gln-tRNA(Gln) through the transamidation of misacylated Glu-tRNA(Gln) in organisms which lack glutaminyl-tRNA synthetase. The reaction takes place in the presence of glutamine and ATP through an activated gamma-phospho-Glu-tRNA(Gln). The GatDE system is specific for glutamate and does not act on aspartate. In Methanosarcina barkeri (strain Fusaro / DSM 804), this protein is Glutamyl-tRNA(Gln) amidotransferase subunit E.